Reading from the N-terminus, the 1262-residue chain is Synaptopodin-2 (1262 aa).

The interval 1 to 174 (MGTGDFICIS…PGSQEGHLVE (174 aa)) is interaction with VPS18. Residues 6 to 88 (FICISMTGGA…SLHLLIKRPT (83 aa)) enclose the PDZ domain. Composition is skewed to polar residues over residues 89–105 (SGTSEALDSETENTNHQ) and 246–260 (TSLTSGTTVQTSSGR). 2 disordered regions span residues 89–114 (SGTSEALDSETENTNHQHLPHGGPME) and 239–276 (PAPEKADTSLTSGTTVQTSSGRELTVIQGRDPGGTGLP). Ser304, Ser323, and Ser324 each carry phosphoserine. Residues 323–363 (SSEGTEQGEDQRSGKDQGRPHKHRARHARLRRSESLSEKQV) are disordered. Thr327 is subject to Phosphothreonine. A compositionally biased stretch (basic and acidic residues) spans 331 to 341 (EDQRSGKDQGR). Residues 342–352 (PHKHRARHARL) are compositionally biased toward basic residues. The span at 353-363 (RRSESLSEKQV) shows a compositional bias: basic and acidic residues. The Nuclear localization signal motif lies at 392-400 (KKRRRRARK). Interaction with ACTN2 regions lie at residues 477–658 (MEML…FYDS), 659–922 (SEQI…PPVA), and 899–1153 (QSPT…NIEE). 2 disordered regions span residues 503–576 (AQNE…GPQR) and 592–703 (NQTA…SPNP). 5 positions are modified to phosphoserine: Ser518, Ser543, Ser544, Ser546, and Ser549. F-actin binding regions lie at residues 530 to 658 (TSYQ…FYDS) and 659 to 801 (SEQI…VTAV). Residues 540-552 (RMQSSVSESSFQM) show a composition bias toward low complexity. The segment at 554-560 (RSLGSVP) is interaction with YWHAB. Residue Ser558 is modified to Phosphoserine; by PKA. 2 stretches are compositionally biased toward polar residues: residues 558-569 (SVPQQNGFSGVS) and 592-606 (NQTAAPFSPTQSVTS). Phosphoserine is present on Ser599. Positions 602-809 (QSVTSPIPDF…AVSSIKIAQP (208 aa)) are interaction with YWHAB. Thr605 carries the post-translational modification Phosphothreonine; by PKA and CaMK2. A Phosphoserine modification is found at Ser606. Composition is skewed to pro residues over residues 609 to 625 (PDFPAPPPYSAVSPPPE) and 639 to 650 (AQPPPWPQPAPW). An interaction with BAG3 region spans residues 610-621 (DFPAPPPYSAVS). Residues 614-617 (PPPY) carry the PPPY motif motif. At Tyr617 the chain carries Phosphotyrosine. Residue Ser621 is modified to Phosphoserine. Positions 659–914 (SEQIASRDER…LPASWKYSSN (256 aa)) are F-actin bundling activity. A phosphoserine mark is found at Ser700 and Ser724. Disordered stretches follow at residues 741-799 (MQSS…PQVT) and 833-868 (VVSHNYTPKPSAPTPLVNAAPAGAGGPSNELPGMSG). Residues 745–898 (AKQKTPPPVA…DTVQAHTVRA (154 aa)) are actin binding. Thr749 is modified (phosphothreonine). Over residues 756-782 (KPAVKTSSSSQPVAPVSPVWSPGVAPA) the composition is skewed to low complexity. Phosphoserine occurs at positions 772 and 776. Polar residues predominate over residues 786–799 (AFSTTNPPNPPQVT). An interaction with FLNC region spans residues 808 to 1153 (QPTCPPARPA…EAFRPRNIEE (346 aa)). Ser900, Ser904, and Ser908 each carry phosphoserine. Positions 933–957 (LAAIKSQPPGAQASKTSKKKGKKPL) are disordered. The interaction with ZYX stretch occupies residues 999–1018 (PAMKQALPPRQADIGSPTNA). Residues Ser1014, Ser1055, and Ser1090 each carry the phosphoserine modification.

This sequence belongs to the synaptopodin family. May self-associate in muscle cells under oxidative stress. Binds F-actin. Interacts with ACTN2; ACTN2 is proposed to anchor SYOP2 at Z lines in mature myocytes. Interacts with AKAP6, PPP3CA and CAMK2A. Interacts (phosphorylated form) with YWHAB; YWHAB competes with ACTN2 for interaction with SYNPO2. Interacts with KPNA2; mediating nuclear import of SYNOP2; dependent on interaction with YWHAB. Interacts with IPO13; may be implicated in SYNOP2 nuclear import. Interacts with ZYX, FLNC, ILK. Interacts with BAG3 (via WW 1 domain). May associate with the CASA complex consisting of HSPA8, HSPB8 and BAG3. Interacts with VPS18. Phosphorylated by PKA, and by CaMK2 at multiple sites. Dephosphorylated by calcineurin at Ser-558 and Thr-605; abrogating interaction with YWHAB and impairing nuclear import.

The protein localises to the nucleus. Its subcellular location is the cytoplasm. It localises to the cytoskeleton. The protein resides in the myofibril. It is found in the sarcomere. The protein localises to the z line. Its subcellular location is the cell junction. It localises to the focal adhesion. In terms of biological role, has an actin-binding and actin-bundling activity. Can induce the formation of F-actin networks. At the sarcomeric Z lines is proposed to act as adapter protein that links nascent myofibers to the sarcolemma via ZYX and may play a role in early assembly and stabilization of the Z lines. Involved in autophagosome formation. May play a role in chaperone-assisted selective autophagy (CASA) involved in Z lines maintenance in striated muscle under mechanical tension; may link the client-processing CASA chaperone machinery to a membrane-tethering and fusion complex providing autophagosome membranes. Involved in regulation of cell migration. May be a tumor suppressor. The polypeptide is Synaptopodin-2 (Synpo2) (Rattus norvegicus (Rat)).